Here is a 407-residue protein sequence, read N- to C-terminus: Protease ElaD (407 aa).

Residue His-231 is part of the active site. Cys-317 acts as the Nucleophile in catalysis.

It belongs to the peptidase C79 family.

Functionally, protease that can act as an efficient and specific deubiquitinating enzyme in vitro. Does not possess desumoylating and deneddylating activities. The physiological substrate is unknown. In Escherichia coli O157:H7, this protein is Protease ElaD (elaD).